The primary structure comprises 288 residues: MPINETASVTNCDTNFEPLIENLKLFLQLCYLTPSALFLSRVIYITAWKYRKKFRKQRFYTIFLADCVTGFILVNFSIFFTRPLIYVPQACEFVLEHIKKLALFLDIYYPCFRYLQAFQILVQILFVANRASCVLWPLSYSLFWKKWLKSILTTMAISPCLWIWTIAISDKMIVHGYGGLVVLYYRYVSWARSTLFFSILRLTSVITIVVATTTMLIKMSRMKKRIRESERRLCWASVYLSVCYLLPAIAEFEYFLVLKAKLFENSGILHGLVVICWDIQNICSTYVM.

7 helical membrane-spanning segments follow: residues 25–45 (LFLQ…VIYI), 59–79 (FYTI…FSIF), 118–138 (FQIL…LWPL), 148–168 (LKSI…TIAI), 197–217 (FSIL…TMLI), 238–258 (VYLS…FLVL), and 268–288 (ILHG…TYVM).

The protein belongs to the nematode receptor-like protein srg family.

Its subcellular location is the membrane. The sequence is that of Serpentine receptor class gamma-1 (srg-1) from Caenorhabditis elegans.